A 284-amino-acid polypeptide reads, in one-letter code: MDAIKKKMVAMKMEKENALDRAEQLEQKLRETEEAKAKIEDDYNSLQKKSIQTENDLDNTQTQLQDVQAKYETTEKQIAEHEQEIQSLTRKISMLEEDIMKSEERYTTAASKLEEASKAADESERNRKVLENLNCGNDERIDQLEKQLTEAKWIAEEADKKYEEAARKLAITEVDLERAEARLEAAEAKVIDLEEQLTVVGANIKTLQVQNDQASQREDSYEETIRDLTNRLKDAENRATEAERTVSKLRKEVDRLEDELLTEKEKYKAISDELDATFAELAGY.

The stretch at 1-284 (MDAIKKKMVA…DATFAELAGY (284 aa)) forms a coiled coil. Positions 32-41 (TEEAKAKIED) are enriched in basic and acidic residues. Residues 32 to 60 (TEEAKAKIEDDYNSLQKKSIQTENDLDNT) are disordered. Residues 44–60 (NSLQKKSIQTENDLDNT) are compositionally biased toward polar residues.

The protein belongs to the tropomyosin family. As to quaternary structure, homodimer.

Functionally, tropomyosin, in association with the troponin complex, plays a central role in the calcium dependent regulation of muscle contraction. This Mytilus edulis (Blue mussel) protein is Tropomyosin.